Here is a 492-residue protein sequence, read N- to C-terminus: uncharacterized protein (492 aa).

266–273 (GIQGTGKS) is a binding site for ATP.

The protein belongs to the AAA ATPase family. Highly divergent.

The protein resides in the plastid. The protein localises to the chloroplast. This is an uncharacterized protein from Pyropia yezoensis (Susabi-nori).